We begin with the raw amino-acid sequence, 291 residues long: uncharacterized protein (291 aa).

Transmembrane regions (helical) follow at residues 42–62 (IFFF…RALW) and 86–106 (TIFP…LALD).

This sequence belongs to the cytochrome c oxidase subunit 2 family.

The protein localises to the mitochondrion membrane. This is an uncharacterized protein from Arabidopsis thaliana (Mouse-ear cress).